Here is a 257-residue protein sequence, read N- to C-terminus: 1-(5-phosphoribosyl)-5-[(5-phosphoribosylamino)methylideneamino] imidazole-4-carboxamide isomerase (257 aa).

Asp-8 acts as the Proton acceptor in catalysis. The Proton donor role is filled by Asp-129.

Belongs to the HisA/HisF family.

It is found in the cytoplasm. It carries out the reaction 1-(5-phospho-beta-D-ribosyl)-5-[(5-phospho-beta-D-ribosylamino)methylideneamino]imidazole-4-carboxamide = 5-[(5-phospho-1-deoxy-D-ribulos-1-ylimino)methylamino]-1-(5-phospho-beta-D-ribosyl)imidazole-4-carboxamide. It functions in the pathway amino-acid biosynthesis; L-histidine biosynthesis; L-histidine from 5-phospho-alpha-D-ribose 1-diphosphate: step 4/9. In Gloeothece citriformis (strain PCC 7424) (Cyanothece sp. (strain PCC 7424)), this protein is 1-(5-phosphoribosyl)-5-[(5-phosphoribosylamino)methylideneamino] imidazole-4-carboxamide isomerase.